The sequence spans 167 residues: Crossover junction endodeoxyribonuclease RuvC (167 aa).

Active-site residues include aspartate 7, glutamate 67, and aspartate 139. 3 residues coordinate Mg(2+): aspartate 7, glutamate 67, and aspartate 139.

It belongs to the RuvC family. Homodimer which binds Holliday junction (HJ) DNA. The HJ becomes 2-fold symmetrical on binding to RuvC with unstacked arms; it has a different conformation from HJ DNA in complex with RuvA. In the full resolvosome a probable DNA-RuvA(4)-RuvB(12)-RuvC(2) complex forms which resolves the HJ. Requires Mg(2+) as cofactor.

It is found in the cytoplasm. The catalysed reaction is Endonucleolytic cleavage at a junction such as a reciprocal single-stranded crossover between two homologous DNA duplexes (Holliday junction).. In terms of biological role, the RuvA-RuvB-RuvC complex processes Holliday junction (HJ) DNA during genetic recombination and DNA repair. Endonuclease that resolves HJ intermediates. Cleaves cruciform DNA by making single-stranded nicks across the HJ at symmetrical positions within the homologous arms, yielding a 5'-phosphate and a 3'-hydroxyl group; requires a central core of homology in the junction. The consensus cleavage sequence is 5'-(A/T)TT(C/G)-3'. Cleavage occurs on the 3'-side of the TT dinucleotide at the point of strand exchange. HJ branch migration catalyzed by RuvA-RuvB allows RuvC to scan DNA until it finds its consensus sequence, where it cleaves and resolves the cruciform DNA. The sequence is that of Crossover junction endodeoxyribonuclease RuvC from Akkermansia muciniphila (strain ATCC BAA-835 / DSM 22959 / JCM 33894 / BCRC 81048 / CCUG 64013 / CIP 107961 / Muc).